We begin with the raw amino-acid sequence, 178 residues long: Ribosome maturation factor RimM (178 aa).

The region spanning 94-174 is the PRC barrel domain; sequence KNEFFWFDLI…RIDVINSFDI (81 aa).

Belongs to the RimM family. As to quaternary structure, binds ribosomal protein uS19.

The protein localises to the cytoplasm. In terms of biological role, an accessory protein needed during the final step in the assembly of 30S ribosomal subunit, possibly for assembly of the head region. Essential for efficient processing of 16S rRNA. May be needed both before and after RbfA during the maturation of 16S rRNA. It has affinity for free ribosomal 30S subunits but not for 70S ribosomes. This chain is Ribosome maturation factor RimM, found in Aliarcobacter butzleri (strain RM4018) (Arcobacter butzleri).